Reading from the N-terminus, the 1167-residue chain is ATP-dependent helicase/nuclease subunit A (1167 aa).

Positions 2-451 (KNWTAEQMRA…IELSLNFRSR (450 aa)) constitute a UvrD-like helicase ATP-binding domain. Residue 23–30 (AAAGAGKT) coordinates ATP. The UvrD-like helicase C-terminal domain maps to 478-768 (KAFLKKGADY…RVMSVHKSKG (291 aa)).

The protein belongs to the helicase family. AddA subfamily. Heterodimer of AddA and AddB/RexB. The cofactor is Mg(2+).

The catalysed reaction is Couples ATP hydrolysis with the unwinding of duplex DNA by translocating in the 3'-5' direction.. The enzyme catalyses ATP + H2O = ADP + phosphate + H(+). The heterodimer acts as both an ATP-dependent DNA helicase and an ATP-dependent, dual-direction single-stranded exonuclease. Recognizes the chi site generating a DNA molecule suitable for the initiation of homologous recombination. The AddA nuclease domain is required for chi fragment generation; this subunit has the helicase and 3' -&gt; 5' nuclease activities. In Carboxydothermus hydrogenoformans (strain ATCC BAA-161 / DSM 6008 / Z-2901), this protein is ATP-dependent helicase/nuclease subunit A.